Consider the following 317-residue polypeptide: Phospho-N-acetylmuramoyl-pentapeptide-transferase (317 aa).

The next 9 membrane-spanning stretches (helical) occupy residues 4–24 (LIYSVLIAFFIAMLEGPILIP), 49–69 (TPTMGGIIFILATFITMAVIV), 76–96 (AMIALYAFIGFGIIGAIDDTL), 112–132 (MILLLAISGIFAYYSANNPYI), 147–167 (LGVFYIPFIIVYFAATTNAVN), 186–206 (FLALVSFAMGHITLAVFCAIL), 223–243 (IFMGDTGSLALGGAIGAVAMI), 246–266 (LPLLVIIIGGIYVLEALSVIF), and 297–317 (RVVSVFCIVTVILCLVGFLSL).

It belongs to the glycosyltransferase 4 family. MraY subfamily. Requires Mg(2+) as cofactor.

It is found in the cell membrane. The catalysed reaction is UDP-N-acetyl-alpha-D-muramoyl-L-alanyl-gamma-D-glutamyl-meso-2,6-diaminopimeloyl-D-alanyl-D-alanine + di-trans,octa-cis-undecaprenyl phosphate = di-trans,octa-cis-undecaprenyl diphospho-N-acetyl-alpha-D-muramoyl-L-alanyl-D-glutamyl-meso-2,6-diaminopimeloyl-D-alanyl-D-alanine + UMP. It functions in the pathway cell wall biogenesis; peptidoglycan biosynthesis. Catalyzes the initial step of the lipid cycle reactions in the biosynthesis of the cell wall peptidoglycan: transfers peptidoglycan precursor phospho-MurNAc-pentapeptide from UDP-MurNAc-pentapeptide onto the lipid carrier undecaprenyl phosphate, yielding undecaprenyl-pyrophosphoryl-MurNAc-pentapeptide, known as lipid I. This Clostridium kluyveri (strain NBRC 12016) protein is Phospho-N-acetylmuramoyl-pentapeptide-transferase.